The primary structure comprises 85 residues: DNA-directed RNA polymerase subunit Rpo11 (85 aa).

It belongs to the archaeal Rpo11/eukaryotic RPB11/RPC19 RNA polymerase subunit family. As to quaternary structure, part of the RNA polymerase complex.

The protein resides in the cytoplasm. The enzyme catalyses RNA(n) + a ribonucleoside 5'-triphosphate = RNA(n+1) + diphosphate. In terms of biological role, DNA-dependent RNA polymerase (RNAP) catalyzes the transcription of DNA into RNA using the four ribonucleoside triphosphates as substrates. This is DNA-directed RNA polymerase subunit Rpo11 from Methanothermobacter thermautotrophicus (strain ATCC 29096 / DSM 1053 / JCM 10044 / NBRC 100330 / Delta H) (Methanobacterium thermoautotrophicum).